We begin with the raw amino-acid sequence, 525 residues long: Averantin hydroxylase (525 aa).

Residues 36 to 56 (VLATFVAGIGALLLWTLTTVF) traverse the membrane as a helical segment. Asn-315 is a glycosylation site (N-linked (GlcNAc...) asparagine). Cys-462 lines the heme pocket.

The protein belongs to the cytochrome P450 family. The cofactor is heme.

It localises to the membrane. It carries out the reaction (1'S)-averantin + reduced [NADPH--hemoprotein reductase] + O2 = (1'S,5'R)-5'-hydroxyaverantin + oxidized [NADPH--hemoprotein reductase] + H2O. The enzyme catalyses (1'S)-averantin + reduced [NADPH--hemoprotein reductase] + O2 = (1'S,5'S)-5'-hydroxyaverantin + oxidized [NADPH--hemoprotein reductase] + H2O + H(+). It functions in the pathway mycotoxin biosynthesis. Averantin hydroxylase; part of the fragmented gene cluster that mediates the biosynthesis of dothistromin (DOTH), a polyketide toxin very similar in structure to the aflatoxin precursor, versicolorin B. The first step of the pathway is the conversion of acetate to norsolorinic acid (NOR) and requires the fatty acid synthase subunits hexA and hexB, as well as the polyketide synthase pksA. PksA combines a hexanoyl starter unit and 7 malonyl-CoA extender units to synthesize the precursor NOR. The hexanoyl starter unit is provided to the acyl-carrier protein (ACP) domain by the fungal fatty acid synthase hexA/hexB. The second step is the conversion of NOR to averantin (AVN) and requires the norsolorinic acid ketoreductase nor1, which catalyzes the dehydration of norsolorinic acid to form (1'S)-averantin. The cytochrome P450 monooxygenase avnA then catalyzes the hydroxylation of AVN to 5'hydroxyaverantin (HAVN). The next step is performed by adhA that transforms HAVN to averufin (AVF). Averufin might then be converted to hydroxyversicolorone by cypX and avfA. Hydroxyversicolorone is further converted versiconal hemiacetal acetate (VHA) by moxY. VHA is then the substrate for the versiconal hemiacetal acetate esterase est1 to yield versiconal (VAL). Versicolorin B synthase vbsA then converts VAL to versicolorin B (VERB) by closing the bisfuran ring. Then, the activity of the versicolorin B desaturase verB leads to versicolorin A (VERA). DotB, a predicted chloroperoxidase, may perform epoxidation of the A-ring of VERA. Alternatively, a cytochrome P450, such as cypX or avnA could catalyze this step. It is also possible that another, uncharacterized, cytochrome P450 enzyme is responsible for this step. Opening of the epoxide could potentially be achieved by the epoxide hydrolase epoA. However, epoA seems not to be required for DOTH biosynthesis, but other epoxide hydrolases may have the ability to complement this hydrolysis. Alternatively, opening of the epoxide ring could be achieved non-enzymatically. The next step is the deoxygenation of ring A to yield the 5,8-dihydroxyanthraquinone which is most likely catalyzed by the NADPH dehydrogenase encoded by ver1. The last stages of DOTH biosynthesis are proposed to involve hydroxylation of the bisfuran. OrdB and norB might have oxidative roles here. An alternative possibility is that cytochrome P450 monoogenases such as avnA and cypX might perform these steps in addition to previously proposed steps. The polypeptide is Averantin hydroxylase (Dothistroma septosporum (strain NZE10 / CBS 128990) (Red band needle blight fungus)).